The chain runs to 56 residues: Repressor-like protein SSo7c4 (56 aa).

A SpoVT-AbrB domain is found at Glu4–Ser51.

This chain is Repressor-like protein SSo7c4, found in Saccharolobus solfataricus (strain ATCC 35092 / DSM 1617 / JCM 11322 / P2) (Sulfolobus solfataricus).